Reading from the N-terminus, the 384-residue chain is DNA replication and repair protein RecF (384 aa).

30–37 (GNNAQGKS) contributes to the ATP binding site.

This sequence belongs to the RecF family.

Its subcellular location is the cytoplasm. Functionally, the RecF protein is involved in DNA metabolism; it is required for DNA replication and normal SOS inducibility. RecF binds preferentially to single-stranded, linear DNA. It also seems to bind ATP. This chain is DNA replication and repair protein RecF, found in Gloeothece citriformis (strain PCC 7424) (Cyanothece sp. (strain PCC 7424)).